Reading from the N-terminus, the 325-residue chain is Cytochrome c1, heme protein, mitochondrial (325 aa).

A mitochondrion-targeting transit peptide spans 1-84 (MAAAAASLRG…AMALHSAVSA (84 aa)). The Mitochondrial intermembrane segment spans residues 85-281 (SDLELHPPSY…TFLRWASEPE (197 aa)). The Cytochrome c domain maps to 108–209 (TSIRRGFQVY…IVRARHGGED (102 aa)). 3 residues coordinate heme c: Cys-121, Cys-124, and His-125. The residue at position 182 (Ser-182) is a Phosphoserine. Met-244 serves as a coordination point for heme c. The helical transmembrane segment at 282–315 (HDHRKRMGLKMLMMMALLVPLVYTIKRHKWSVLK) threads the bilayer. The Mitochondrial matrix portion of the chain corresponds to 316-325 (SRKLAYRPPK).

It belongs to the cytochrome c family. In terms of assembly, component of the ubiquinol-cytochrome c oxidoreductase (cytochrome b-c1 complex, complex III, CIII), a multisubunit enzyme composed of 11 subunits. The complex is composed of 3 respiratory subunits cytochrome b, cytochrome c1 and Rieske protein UQCRFS1, 2 core protein subunits UQCRC1/QCR1 and UQCRC2/QCR2, and 6 low-molecular weight protein subunits UQCRH/QCR6, UQCRB/QCR7, UQCRQ/QCR8, UQCR10/QCR9, UQCR11/QCR10 and subunit 9, the cleavage product of Rieske protein UQCRFS1. The complex exists as an obligatory dimer and forms supercomplexes (SCs) in the inner mitochondrial membrane with NADH-ubiquinone oxidoreductase (complex I, CI) and cytochrome c oxidase (complex IV, CIV), resulting in different assemblies (supercomplex SCI(1)III(2)IV(1) and megacomplex MCI(2)III(2)IV(2)). Interacts with FLVCR2; this interaction occurs in the absence of heme and is disrupted upon heme binding. Heme c is required as a cofactor.

The protein localises to the mitochondrion inner membrane. The enzyme catalyses a quinol + 2 Fe(III)-[cytochrome c](out) = a quinone + 2 Fe(II)-[cytochrome c](out) + 2 H(+)(out). Its function is as follows. Component of the ubiquinol-cytochrome c oxidoreductase, a multisubunit transmembrane complex that is part of the mitochondrial electron transport chain which drives oxidative phosphorylation. The respiratory chain contains 3 multisubunit complexes succinate dehydrogenase (complex II, CII), ubiquinol-cytochrome c oxidoreductase (cytochrome b-c1 complex, complex III, CIII) and cytochrome c oxidase (complex IV, CIV), that cooperate to transfer electrons derived from NADH and succinate to molecular oxygen, creating an electrochemical gradient over the inner membrane that drives transmembrane transport and the ATP synthase. The cytochrome b-c1 complex catalyzes electron transfer from ubiquinol to cytochrome c, linking this redox reaction to translocation of protons across the mitochondrial inner membrane, with protons being carried across the membrane as hydrogens on the quinol. In the process called Q cycle, 2 protons are consumed from the matrix, 4 protons are released into the intermembrane space and 2 electrons are passed to cytochrome c. Cytochrome c1 is a catalytic core subunit containing a c-type heme. It transfers electrons from the [2Fe-2S] iron-sulfur cluster of the Rieske protein to cytochrome c. The polypeptide is Cytochrome c1, heme protein, mitochondrial (CYC1) (Homo sapiens (Human)).